Reading from the N-terminus, the 209-residue chain is MTSTLDPVLTAADAALRTLFARPHATRAAPAPAQAPGEMTDSERREAGALMRVNHVGEVCAQALYTAQAAVARDPVLRARLLEASHEEADHLAWTRQRLDELGARPSVLNPLWYAGAFGLGLVAGRLGDPLSLGFVAETERQVEAHLESHLGRLPAADSASRAVVEQMKIDEAQHAAQAIDAGAAELPAPAKALMRLASRVMTTVAHRI.

Low complexity predominate over residues 23 to 36; that stretch reads PHATRAAPAPAQAP. The interval 23-42 is disordered; the sequence is PHATRAAPAPAQAPGEMTDS. Fe cation contacts are provided by glutamate 58, glutamate 88, histidine 91, glutamate 140, glutamate 172, and histidine 175.

Belongs to the COQ7 family. Fe cation is required as a cofactor.

Its subcellular location is the cell membrane. The catalysed reaction is a 5-methoxy-2-methyl-3-(all-trans-polyprenyl)benzene-1,4-diol + AH2 + O2 = a 3-demethylubiquinol + A + H2O. Its pathway is cofactor biosynthesis; ubiquinone biosynthesis. Its function is as follows. Catalyzes the hydroxylation of 2-nonaprenyl-3-methyl-6-methoxy-1,4-benzoquinol during ubiquinone biosynthesis. This chain is 3-demethoxyubiquinol 3-hydroxylase, found in Variovorax paradoxus (strain S110).